The chain runs to 141 residues: Period circadian protein (141 aa).

Residues 1-141 (EGSGGSGSSG…VTLTESLLNK (141 aa)) form a disordered region. Residues 11 to 23 (HFTTGSNVHMSSV) show a composition bias toward polar residues. Residues 29–68 (GGTGGTGTGTGTGTGTGTGTGTGTGTGTGTGTGTGTGTGT) are compositionally biased toward gly residues. 19 consecutive repeat copies span residues 30-31 (GT), 33-34 (GT), 35-36 (GT), 37-38 (GT), 39-40 (GT), 41-42 (GT), 43-44 (GT), 45-46 (GT), 47-48 (GT), 49-50 (GT), 51-52 (GT), 53-54 (GT), 55-56 (GT), 57-58 (GT), 59-60 (GT), 61-62 (GT), 63-64 (GT), 65-66 (GT), and 67-68 (GT). The 32 X 2 AA approximate tandem repeats of G-T stretch occupies residues 30-94 (GTGGTGTGTG…ANGTGTGKGT (65 aa)). Residues 69–70 (AS) form a 20; approximate repeat. The span at 69-85 (ASGTATGTASGTATGTA) shows a compositional bias: low complexity. The stretch at 71 to 72 (GT) is repeat 21. A 22; approximate repeat occupies 73–74 (AT). Copy 23 of the repeat occupies 75–76 (GT). Residues 77-78 (AS) form a 24; approximate repeat. The stretch at 79–80 (GT) is repeat 25. A 26; approximate repeat occupies 81-82 (AT). Residues 83–84 (GT) form repeat 27. A 28; approximate repeat occupies 85–86 (AN). Tandem repeats lie at residues 87–88 (GT) and 89–90 (GT). Residues 91-92 (GK) form a 31; approximate repeat. Residues 93 to 94 (GT) form repeat 32. Gly residues predominate over residues 101–113 (SGSGSGTGTGTGT). A compositionally biased stretch (low complexity) spans 114-129 (GTTTTTTTGNNSSSST). A compositionally biased stretch (polar residues) spans 130–141 (PPVTLTESLLNK).

As to quaternary structure, forms a heterodimer with timeless (TIM); the complex then translocates into the nucleus. Phosphorylated with a circadian rhythmicity, probably by the double-time protein (dbt). Phosphorylation could be implicated in the stability of per monomer and in the formation of heterodimer per-tim.

It is found in the nucleus. It localises to the cytoplasm. Its subcellular location is the perinuclear region. Functionally, essential for biological clock functions. Determines the period length of circadian and ultradian rhythms; an increase in PER dosage leads to shortened circadian rhythms and a decrease leads to lengthened circadian rhythms. Essential for the circadian rhythmicity of locomotor activity, eclosion behavior, and for the rhythmic component of the male courtship song that originates in the thoracic nervous system. The biological cycle depends on the rhythmic formation and nuclear localization of the TIM-PER complex. Light induces the degradation of TIM, which promotes elimination of PER. Nuclear activity of the heterodimer coordinatively regulates PER and TIM transcription through a negative feedback loop. Behaves as a negative element in circadian transcriptional loop. Does not appear to bind DNA, suggesting indirect transcriptional inhibition. The chain is Period circadian protein (per) from Drosophila serrata (Fruit fly).